Reading from the N-terminus, the 20-residue chain is GMP synthase [glutamine-hydrolyzing] (20 aa).

The 20-residue stretch at 1 to 20 folds into the GMPS ATP-PPase domain; that stretch reads ALGDQLLSVFVDHTLVDEVA.

Homodimer.

The enzyme catalyses XMP + L-glutamine + ATP + H2O = GMP + L-glutamate + AMP + diphosphate + 2 H(+). It participates in purine metabolism; GMP biosynthesis; GMP from XMP (L-Gln route): step 1/1. Catalyzes the synthesis of GMP from XMP. This chain is GMP synthase [glutamine-hydrolyzing] (guaA), found in Fructilactobacillus sanfranciscensis (Lactobacillus sanfranciscensis).